Here is a 76-residue protein sequence, read N- to C-terminus: Conotoxin Vc6.6 (76 aa).

A signal peptide spans 1–22 (MKLTCMVIVAVLFLTANTFVTA). The propeptide occupies 23 to 52 (VPHSSNALENLYLKAHHEMNNPKDSELNKR). Disulfide bonds link C53–C67, C60–C71, and C66–C75.

It belongs to the conotoxin O1 superfamily. As to expression, expressed by the venom duct.

Its subcellular location is the secreted. This Conus victoriae (Queen Victoria cone) protein is Conotoxin Vc6.6.